The chain runs to 614 residues: NEDD8 ultimate buster 1 (614 aa).

Coiled coils occupy residues 36–71 (LAVK…IERG) and 151–206 (NVKA…MVVD). 3 UBA domains span residues 373–413 (YIDP…ISNR), 423–469 (EEKE…LLSN), and 488–528 (SPSQ…LAHH). The Nuclear localization signal signature appears at 413–430 (RREELAQIRKEEKEKRRR). The tract at residues 426–473 (EKRRRRLENVNTLRGMGYSTQAAKQALHQARGNLDDALKVLLSNPHMW) is NEDD8-binding 1. The tract at residues 531-590 (SLPPDLQFSGEDSSPTPSTSPSDSAGTSSASTDEDMETEAVNEILEDIPEHEEDYLDSTL) is disordered. Positions 539 to 561 (SGEDSSPTPSTSPSDSAGTSSAS) are enriched in low complexity. The interval 549–597 (TSPSDSAGTSSASTDEDMETEAVNEILEDIPEHEEDYLDSTLEDEEVII) is NEDD8-binding 2. Acidic residues predominate over residues 562–590 (TDEDMETEAVNEILEDIPEHEEDYLDSTL).

As to quaternary structure, directly interacts with NEDD8 and PSMD4/S5a, a member of the regulatory subunit of the 26S proteasome. Interacts with AIPL1. The interaction with UBD via UBA domains facilitates the linking of UBD-conjugated target protein to the proteasome complex and accelerates UBD degradation and that of its conjugates.

It localises to the nucleus. In terms of biological role, specific down-regulator of the NEDD8 conjugation system. Recruits NEDD8, UBD, and their conjugates to the proteasome for degradation. This is NEDD8 ultimate buster 1 (Nub1) from Mus musculus (Mouse).